Consider the following 279-residue polypeptide: Inhibitor of growth protein 1 (279 aa).

Residues 115-206 (AHQDISDGTG…EASPADLPID (92 aa)) are disordered. A Glycyl lysine isopeptide (Lys-Gly) (interchain with G-Cter in SUMO2) cross-link involves residue Lys135. Positions 154 to 171 (RNNENRENASNNHDHDDI) are enriched in basic and acidic residues. Residues 179-191 (KKAKTSKKKKRSK) show a composition bias toward basic residues. The PHD-type zinc-finger motif lies at 210–259 (PTYCLCNQVSYGEMIGCDNDECPIEWFHFSCVGLNHKPKGKWYCPKCRGE). Zn(2+) contacts are provided by Cys213, Cys215, Cys226, Cys231, His237, Cys240, Cys253, and Cys256. Residues 262-279 (KTMDKALEKSKKERAYNR) are PBR.

The protein belongs to the ING family. Interacts with H3K4me3 and to a lesser extent with H3K4me2. Isoform 2 interacts with RSL1D1. In the adult, widely expressed with highest levels in thymus and testis.

It is found in the nucleus. Its function is as follows. Isoform 1 inhibits p53-dependent transcriptional activation and may function as an oncoprotein. Isoform 2 acts as a negative growth regulator by cooperating with p53 in transcriptional activation of p53-responsive genes and may act as a tumor suppressor. This chain is Inhibitor of growth protein 1 (Ing1), found in Mus musculus (Mouse).